Here is a 349-residue protein sequence, read N- to C-terminus: tRNA pseudouridine synthase D (349 aa).

Position 27 (Phe27) interacts with substrate. The active-site Nucleophile is the Asp80. A substrate-binding site is contributed by Asn129. The TRUD domain maps to 155-303 (GVPNYFGAQR…VEAARRAMLL (149 aa)). Phe329 lines the substrate pocket.

Belongs to the pseudouridine synthase TruD family.

It carries out the reaction uridine(13) in tRNA = pseudouridine(13) in tRNA. Responsible for synthesis of pseudouridine from uracil-13 in transfer RNAs. This chain is tRNA pseudouridine synthase D, found in Escherichia coli O8 (strain IAI1).